Here is a 251-residue protein sequence, read N- to C-terminus: PEDMDTPRNVYKVSTQNPGSDVAAETAAALAAASIVFKDSDPSYSGKLLHTAMKVFDFADRYRGSYSDSIGSVVCPFYCSYSGHHDELLWGASWIHRASQNRSYLVYIKSNGHILGEDDDGFSASWDDKETGTKVLLVSKSFLERHVEEFQLYKAHSGNYICSLLPGTSNFQGQYTPGGLLYKASESNLQYVTSTTLLLLTYAKYLRTNGGVATCGSSKVTAETLISEAKKQVDYILGNNPAKISYMVGFG.

The protein belongs to the glycosyl hydrolase 9 (cellulase E) family.

The catalysed reaction is Endohydrolysis of (1-&gt;4)-beta-D-glucosidic linkages in cellulose, lichenin and cereal beta-D-glucans.. In terms of biological role, degrades carboxymethylcellulose (CMC). In Prunus persica (Peach), this protein is Endoglucanase CX.